A 407-amino-acid polypeptide reads, in one-letter code: tRNA (guanine(26)-N(2))-dimethyltransferase (407 aa).

One can recognise a Trm1 methyltransferase domain in the interval 10 to 400 (AVTHEGRSII…APWGEVLEAV (391 aa)). R50, R82, D99, and E128 together coordinate S-adenosyl-L-methionine.

The protein belongs to the class I-like SAM-binding methyltransferase superfamily. Trm1 family.

The catalysed reaction is guanosine(26) in tRNA + 2 S-adenosyl-L-methionine = N(2)-dimethylguanosine(26) in tRNA + 2 S-adenosyl-L-homocysteine + 2 H(+). Dimethylates a single guanine residue at position 26 of a number of tRNAs using S-adenosyl-L-methionine as donor of the methyl groups. The sequence is that of tRNA (guanine(26)-N(2))-dimethyltransferase from Aeropyrum pernix (strain ATCC 700893 / DSM 11879 / JCM 9820 / NBRC 100138 / K1).